Here is a 180-residue protein sequence, read N- to C-terminus: Adenine phosphoribosyltransferase (180 aa).

It belongs to the purine/pyrimidine phosphoribosyltransferase family. As to quaternary structure, homodimer.

The protein localises to the cytoplasm. It carries out the reaction AMP + diphosphate = 5-phospho-alpha-D-ribose 1-diphosphate + adenine. It functions in the pathway purine metabolism; AMP biosynthesis via salvage pathway; AMP from adenine: step 1/1. In terms of biological role, catalyzes a salvage reaction resulting in the formation of AMP, that is energically less costly than de novo synthesis. The protein is Adenine phosphoribosyltransferase of Mycoplasma genitalium (strain ATCC 33530 / DSM 19775 / NCTC 10195 / G37) (Mycoplasmoides genitalium).